A 395-amino-acid polypeptide reads, in one-letter code: Phosphoglycerate kinase (395 aa).

Substrate is bound by residues 21-23 (DLN), arginine 36, 59-62 (HLGR), arginine 113, and arginine 146. ATP contacts are provided by residues lysine 197, glutamate 324, and 350 to 353 (GGDT).

Belongs to the phosphoglycerate kinase family. Monomer.

It is found in the cytoplasm. The catalysed reaction is (2R)-3-phosphoglycerate + ATP = (2R)-3-phospho-glyceroyl phosphate + ADP. It functions in the pathway carbohydrate degradation; glycolysis; pyruvate from D-glyceraldehyde 3-phosphate: step 2/5. This Acinetobacter baumannii (strain ACICU) protein is Phosphoglycerate kinase.